The following is a 277-amino-acid chain: NAD kinase (277 aa).

The active-site Proton acceptor is D67. NAD(+) contacts are provided by residues 67-68, R72, 137-138, K148, R165, D167, 178-183, L202, and Q236; these read DG, NE, and TGYAMS.

Belongs to the NAD kinase family. The cofactor is a divalent metal cation.

The protein resides in the cytoplasm. The enzyme catalyses NAD(+) + ATP = ADP + NADP(+) + H(+). Its function is as follows. Involved in the regulation of the intracellular balance of NAD and NADP, and is a key enzyme in the biosynthesis of NADP. Catalyzes specifically the phosphorylation on 2'-hydroxyl of the adenosine moiety of NAD to yield NADP. The sequence is that of NAD kinase from Pyrococcus abyssi (strain GE5 / Orsay).